The primary structure comprises 608 residues: Nuclear protein localization protein 4 homolog (608 aa).

Ala-2 bears the N-acetylalanine mark. An N6-acetyllysine modification is found at Lys-179. Residues 226 to 363 (IMFENHTVAD…ICRLSPDGHF (138 aa)) form the MPN domain. A RanBP2-type zinc finger spans residues 580-608 (TSAMWACQHCTFMNQPGTGHCEMCSLPRT).

This sequence belongs to the NPL4 family. In terms of assembly, heterodimer with UFD1. The heterodimer binds ubiquitinated proteins. The heterodimer binds to VCP and inhibits Golgi membrane fusion. Interacts with ZFAND2B; probably through VCP.

The protein resides in the cytoplasm. Its subcellular location is the cytosol. It is found in the endoplasmic reticulum. The protein localises to the nucleus. It participates in protein degradation; proteasomal ubiquitin-dependent pathway. In terms of biological role, the ternary complex containing UFD1, VCP and NPLOC4 binds ubiquitinated proteins and is necessary for the export of misfolded proteins from the ER to the cytoplasm, where they are degraded by the proteasome. The NPLOC4-UFD1-VCP complex regulates spindle disassembly at the end of mitosis and is necessary for the formation of a closed nuclear envelope. Acts as a negative regulator of type I interferon production via the complex formed with VCP and UFD1, which binds to RIGI and recruits RNF125 to promote ubiquitination and degradation of RIGI. This is Nuclear protein localization protein 4 homolog (Nploc4) from Mus musculus (Mouse).